The primary structure comprises 426 residues: 3-phosphoshikimate 1-carboxyvinyltransferase (426 aa).

3 residues coordinate 3-phosphoshikimate: lysine 22, serine 23, and arginine 27. Lysine 22 is a binding site for phosphoenolpyruvate. Positions 96 and 124 each coordinate phosphoenolpyruvate. 7 residues coordinate 3-phosphoshikimate: serine 170, serine 171, glutamine 172, serine 198, aspartate 314, asparagine 337, and lysine 341. Glutamine 172 contributes to the phosphoenolpyruvate binding site. Residue aspartate 314 is the Proton acceptor of the active site. 3 residues coordinate phosphoenolpyruvate: arginine 345, arginine 387, and lysine 412.

It belongs to the EPSP synthase family. In terms of assembly, monomer.

The protein localises to the cytoplasm. The catalysed reaction is 3-phosphoshikimate + phosphoenolpyruvate = 5-O-(1-carboxyvinyl)-3-phosphoshikimate + phosphate. It participates in metabolic intermediate biosynthesis; chorismate biosynthesis; chorismate from D-erythrose 4-phosphate and phosphoenolpyruvate: step 6/7. Catalyzes the transfer of the enolpyruvyl moiety of phosphoenolpyruvate (PEP) to the 5-hydroxyl of shikimate-3-phosphate (S3P) to produce enolpyruvyl shikimate-3-phosphate and inorganic phosphate. This is 3-phosphoshikimate 1-carboxyvinyltransferase from Shewanella sp. (strain ANA-3).